Reading from the N-terminus, the 192-residue chain is Peptidyl-tRNA hydrolase (192 aa).

Tyrosine 18 contacts tRNA. Histidine 23 (proton acceptor) is an active-site residue. TRNA contacts are provided by phenylalanine 69, asparagine 71, and asparagine 117.

This sequence belongs to the PTH family. Monomer.

The protein resides in the cytoplasm. The catalysed reaction is an N-acyl-L-alpha-aminoacyl-tRNA + H2O = an N-acyl-L-amino acid + a tRNA + H(+). Hydrolyzes ribosome-free peptidyl-tRNAs (with 1 or more amino acids incorporated), which drop off the ribosome during protein synthesis, or as a result of ribosome stalling. Functionally, catalyzes the release of premature peptidyl moieties from peptidyl-tRNA molecules trapped in stalled 50S ribosomal subunits, and thus maintains levels of free tRNAs and 50S ribosomes. This chain is Peptidyl-tRNA hydrolase, found in Neisseria meningitidis serogroup B (strain ATCC BAA-335 / MC58).